The following is a 453-amino-acid chain: AP-4 complex subunit mu-1 (453 aa).

Residues 184–452 (KNEVFLDVVE…LSHSNAYVIR (269 aa)) form the MHD domain. Residues 383-403 (PGLQGPPSRGPSPSAPPLGLG) form a disordered region.

It belongs to the adaptor complexes medium subunit family. Adaptor protein complex 4 (AP-4) is a heterotetramer composed of two large adaptins (epsilon-type subunit AP4E1 and beta-type subunit AP4B1), a medium adaptin (mu-type subunit AP4M1) and a small adaptin (sigma-type AP4S1). Interacts with tyrosine-based sorting signals on the cytoplasmic tail of cargo proteins such as APP, ATG9A, LAMP2 and NAGPA. Interacts with the C-terminal domain of GRID2. Interacts with GRIA1 and GRIA2; the interaction is indirect via CACNG3. Interacts with CACNG3; CACNG3 associates GRIA1 and GRIA2 with the adaptor protein complex 4 (AP-4) to target them to the somatodendritic compartment of neurons. Interacts with HOOK1 and HOOK2; the interactions are direct, mediate the interaction between FTS-Hook-FHIP (FHF) complex and AP-4 and the perinuclear distribution of AP-4. As to expression, high levels in the olfactory bulb, the cerebral cortex, the granule and Purkinje cell layers of the cerebellar cortex and the CA3 region of the hippocampus. Low levels found in molecular layer of cerebellum.

It is found in the golgi apparatus. Its subcellular location is the trans-Golgi network membrane. The protein localises to the early endosome. Functionally, component of the adaptor protein complex 4 (AP-4). Adaptor protein complexes are vesicle coat components involved both in vesicle formation and cargo selection. They control the vesicular transport of proteins in different trafficking pathways. AP-4 forms a non clathrin-associated coat on vesicles departing the trans-Golgi network (TGN) and may be involved in the targeting of proteins from the trans-Golgi network (TGN) to the endosomal-lysosomal system. It is also involved in protein sorting to the basolateral membrane in epithelial cells and the proper asymmetric localization of somatodendritic proteins in neurons. Within AP-4, the mu-type subunit AP4M1 is directly involved in the recognition and binding of tyrosine-based sorting signals found in the cytoplasmic part of cargos. The adaptor protein complex 4 (AP-4) may also recognize other types of sorting signal. This chain is AP-4 complex subunit mu-1, found in Rattus norvegicus (Rat).